Here is a 146-residue protein sequence, read N- to C-terminus: Gastrin-releasing peptide (146 aa).

The signal sequence occupies residues 1 to 23 (MRGSELSLLLLALVLCQAPRGPA). Methionine 52 carries the methionine amide modification. A propeptide spanning residues 56-146 (STDESPSLYA…VLKEKGGTAS (91 aa)) is cleaved from the precursor. Residues 94–112 (AAGNQSHQPPQHPPLSLQP) are compositionally biased toward low complexity. The interval 94–121 (AAGNQSHQPPQHPPLSLQPTWDPEDGSY) is disordered.

The protein belongs to the bombesin/neuromedin-B/ranatensin family. Detected in peptidergic dorsal root ganglion neurons (at protein level). Expressed in several dozen neurons throughout the dorsal retrotrapezoid nucleus/parafacial respiratory group (RTN/pFRG) as well as in scattered cells in the nucleus tractus solitarius and parabrachial nucleus (at protein level). Within the RTN/pFRG, expressed in neuronal subpopulations distinct from those expressing Nmb (at protein level). Expressed in L6 corticothalamic neurons (at protein level). Strongly expressed in several input areas of the auditory cortex including the lateral amygdala, contralateral auditory cortex, temporal association area, perirhinal cortex and auditory thalamic nuclei (at protein level). Detected in the suprachiasmatic nucleus in the hypothalamus. Detected in a subset of glutamatergic cells in the cortex. Highly expressed both in the lateral nucleus of the amygdala, and in regions sending synaptic projections to the lateral nucleus.

The protein resides in the secreted. Its subcellular location is the cytoplasmic vesicle. The protein localises to the secretory vesicle lumen. It is found in the cell projection. It localises to the neuron projection. In terms of biological role, stimulates the release of gastrin and other gastrointestinal hormones. Contributes to the perception of prurient stimuli and to the transmission of itch signals in the spinal cord that promote scratching behavior. Contributes primarily to nonhistaminergic itch sensation. In one study, shown to act in the amygdala as part of an inhibitory network which inhibits memory specifically related to learned fear. In another study, shown to act on vasoactive intestinal peptide (VIP)-expressing cells in the auditory cortex, most likely via extrasynaptic diffusion from local and long-range sources, to mediate disinhibition of glutamatergic cells via VIP cell-specific GRPR signaling which leads to enhanced auditory fear memories. Contributes to the regulation of food intake. Inhibits voltage-gated sodium channels but enhances voltage-gated potassium channels in hippocampal neurons. Contributes to the induction of sighing by acting directly on the pre-Botzinger complex, a cluster of several thousand neurons in the ventrolateral medulla responsible for inspiration during respiratory activity. Functionally, induces an itch response through activation of receptors present on mast cells, triggering mast cell degranulation. This is Gastrin-releasing peptide (Grp) from Mus musculus (Mouse).